The sequence spans 444 residues: Glutamyl-tRNA reductase (444 aa).

Residues 49–52 (TCNR), S109, 114–116 (ETQ), and Q120 contribute to the substrate site. C50 serves as the catalytic Nucleophile. 189–194 (GAGKMG) lines the NADP(+) pocket.

Belongs to the glutamyl-tRNA reductase family. Homodimer.

The enzyme catalyses (S)-4-amino-5-oxopentanoate + tRNA(Glu) + NADP(+) = L-glutamyl-tRNA(Glu) + NADPH + H(+). It participates in porphyrin-containing compound metabolism; protoporphyrin-IX biosynthesis; 5-aminolevulinate from L-glutamyl-tRNA(Glu): step 1/2. Its function is as follows. Catalyzes the NADPH-dependent reduction of glutamyl-tRNA(Glu) to glutamate 1-semialdehyde (GSA). In Bacillus anthracis (strain A0248), this protein is Glutamyl-tRNA reductase.